The primary structure comprises 79 residues: Small ribosomal subunit protein bS16c (79 aa).

Belongs to the bacterial ribosomal protein bS16 family.

The protein localises to the plastid. Its subcellular location is the chloroplast. This chain is Small ribosomal subunit protein bS16c, found in Trieres chinensis (Marine centric diatom).